Reading from the N-terminus, the 208-residue chain is Large ribosomal subunit protein uL4 (208 aa).

The disordered stretch occupies residues 44–79; that stretch reads QRQGTHKSKERSEISGSTRKIGRQKGGGGARRGDMN.

The protein belongs to the universal ribosomal protein uL4 family. Part of the 50S ribosomal subunit.

One of the primary rRNA binding proteins, this protein initially binds near the 5'-end of the 23S rRNA. It is important during the early stages of 50S assembly. It makes multiple contacts with different domains of the 23S rRNA in the assembled 50S subunit and ribosome. Functionally, forms part of the polypeptide exit tunnel. The sequence is that of Large ribosomal subunit protein uL4 from Bacteroides fragilis (strain YCH46).